The chain runs to 332 residues: Biotin synthase (332 aa).

In terms of domain architecture, Radical SAM core spans 51–279 (YKVQLASLLS…RSRVRLSAGR (229 aa)). The [4Fe-4S] cluster site is built by Cys66, Cys70, and Cys73. Cys110, Cys142, Cys202, and Arg274 together coordinate [2Fe-2S] cluster.

This sequence belongs to the radical SAM superfamily. Biotin synthase family. As to quaternary structure, homodimer. [4Fe-4S] cluster is required as a cofactor. The cofactor is [2Fe-2S] cluster.

The catalysed reaction is (4R,5S)-dethiobiotin + (sulfur carrier)-SH + 2 reduced [2Fe-2S]-[ferredoxin] + 2 S-adenosyl-L-methionine = (sulfur carrier)-H + biotin + 2 5'-deoxyadenosine + 2 L-methionine + 2 oxidized [2Fe-2S]-[ferredoxin]. It functions in the pathway cofactor biosynthesis; biotin biosynthesis; biotin from 7,8-diaminononanoate: step 2/2. Catalyzes the conversion of dethiobiotin (DTB) to biotin by the insertion of a sulfur atom into dethiobiotin via a radical-based mechanism. This is Biotin synthase from Prochlorococcus marinus (strain SARG / CCMP1375 / SS120).